The following is a 581-amino-acid chain: Probable CDP-diacylglycerol--glycerol-3-phosphate 3-phosphatidyltransferase (581 aa).

Positions 27–65 (RSATTTTTTTTKACGNGSSQSPPSTPLLSSKSSTITSNK) are disordered. Residues 44-65 (SSQSPPSTPLLSSKSSTITSNK) show a composition bias toward low complexity. An ATP-binding site is contributed by 160–167 (ASLYLGTS). 2 PLD phosphodiesterase domains span residues 248-274 (TIGV…SKDY) and 487-520 (DKWT…GSRS). Catalysis depends on residues His-253, Lys-255, and Asp-260.

This sequence belongs to the CDP-alcohol phosphatidyltransferase class-II family.

It carries out the reaction a CDP-1,2-diacyl-sn-glycerol + sn-glycerol 3-phosphate = a 1,2-diacyl-sn-glycero-3-phospho-(1'-sn-glycero-3'-phosphate) + CMP + H(+). It functions in the pathway phospholipid metabolism; phosphatidylglycerol biosynthesis; phosphatidylglycerol from CDP-diacylglycerol: step 1/2. Functionally, functions in the biosynthesis of the anionic phospholipids phosphatidylglycerol and cardiolipin. The protein is Probable CDP-diacylglycerol--glycerol-3-phosphate 3-phosphatidyltransferase (pgs1) of Dictyostelium discoideum (Social amoeba).